Consider the following 335-residue polypeptide: Tryptophan--tRNA ligase (335 aa).

Residues 19-21 (QPS) and 28-29 (GN) each bind ATP. The 'HIGH' region motif lies at 20–29 (PSSGMLHLGN). Aspartate 143 lines the L-tryptophan pocket. ATP-binding positions include 155–157 (GAD), isoleucine 192, and 201–205 (KMSKS). Positions 201 to 205 (KMSKS) match the 'KMSKS' region motif.

The protein belongs to the class-I aminoacyl-tRNA synthetase family. In terms of assembly, homodimer.

It localises to the cytoplasm. The enzyme catalyses tRNA(Trp) + L-tryptophan + ATP = L-tryptophyl-tRNA(Trp) + AMP + diphosphate + H(+). Functionally, catalyzes the attachment of tryptophan to tRNA(Trp). This Tropheryma whipplei (strain Twist) (Whipple's bacillus) protein is Tryptophan--tRNA ligase.